The primary structure comprises 369 residues: Ribosomal RNA large subunit methyltransferase G (369 aa).

It belongs to the methyltransferase superfamily. RlmG family.

The protein localises to the cytoplasm. The catalysed reaction is guanosine(1835) in 23S rRNA + S-adenosyl-L-methionine = N(2)-methylguanosine(1835) in 23S rRNA + S-adenosyl-L-homocysteine + H(+). Specifically methylates the guanine in position 1835 (m2G1835) of 23S rRNA. The protein is Ribosomal RNA large subunit methyltransferase G of Magnetococcus marinus (strain ATCC BAA-1437 / JCM 17883 / MC-1).